We begin with the raw amino-acid sequence, 320 residues long: MAGVELFSHPALHTRYRAGLCSAAALALLLIAVLTYVPPLLVAYRSHGFWLKQSAYREQPTVRFRYELLFVATTGPGPGSFLAWSTFPAFNRLQEDRLRVPLLSTREEDKNQDGKMDQLHFKLELPLQPTEHVVGVQLILIFSYQLYRMSTFVMQSMAFLQFFSPVPGSQLYANGDLKLNQRQLLNHCGLDTRYNVSVVNGTSPFASDYDLKNIIAAYRDRNVTTVFSDSNPIWMTGRGANTPFIVNATIRYPVEVILYQPGFWETIKFAWIQYVSILLIFLWVFGRIKMFVFQNQVFATTPVSPVLPLSPVLSYKQHQP.

A helical membrane pass occupies residues 23-43 (AAALALLLIAVLTYVPPLLVA). 3 N-linked (GlcNAc...) asparagine glycosylation sites follow: Asn195, Asn200, and Asn222. The chain crosses the membrane as a helical span at residues 266-286 (TIKFAWIQYVSILLIFLWVFG).

This sequence belongs to the TMEM231 family. In terms of assembly, part of the tectonic-like complex (also named B9 complex).

The protein localises to the cell projection. It is found in the cilium membrane. In terms of biological role, transmembrane component of the tectonic-like complex, a complex localized at the transition zone of primary cilia and acting as a barrier that prevents diffusion of transmembrane proteins between the cilia and plasma membranes. Required for ciliogenesis and sonic hedgehog/SHH signaling. The protein is Transmembrane protein 231 (TMEM231) of Gallus gallus (Chicken).